Consider the following 497-residue polypeptide: uncharacterized protein (497 aa).

ATP is bound at residue 266–273 (GIQGTGKS).

It belongs to the AAA ATPase family. Highly divergent.

The protein resides in the plastid. The protein localises to the chloroplast. This is an uncharacterized protein from Trieres chinensis (Marine centric diatom).